Reading from the N-terminus, the 182-residue chain is Glycerol-3-phosphate acyltransferase 1 (182 aa).

5 helical membrane-spanning segments follow: residues 5–25 (MQFLYLVASYLFGNILTAYIV), 54–74 (GYFIVTFLGDAIKGAIVVSIA), 81–101 (STFVMLALLAVLLGHIYPIVF), 117–137 (IAFDYLIALTLVAVFIIFYLI), and 157–177 (ILYSYSIVTTILSALIIVLIL).

Belongs to the PlsY family. Probably interacts with PlsX.

The protein localises to the cell membrane. The catalysed reaction is an acyl phosphate + sn-glycerol 3-phosphate = a 1-acyl-sn-glycero-3-phosphate + phosphate. It functions in the pathway lipid metabolism; phospholipid metabolism. In terms of biological role, catalyzes the transfer of an acyl group from acyl-phosphate (acyl-PO(4)) to glycerol-3-phosphate (G3P) to form lysophosphatidic acid (LPA). This enzyme utilizes acyl-phosphate as fatty acyl donor, but not acyl-CoA or acyl-ACP. The polypeptide is Glycerol-3-phosphate acyltransferase 1 (Bacillus cereus (strain ATCC 10987 / NRS 248)).